Consider the following 784-residue polypeptide: MRRSLAPSQRGPMRPESRHSFTPPLLKKNKRSCQQELEREQELDRKRQSALRDASNTMDLPLPIRFTANSEYERAIAKVLARKFKVPMDNYVPDYGGKRVLGVRRCISRRPLHDPVACNALVLFNPPAYTEHERMGMDPTKVLVHVVVDPLLSNILRPHQREGVRFMYECVEGKRGNFNGCIMADEMGLGKTLQCVTLVWTLLRQGPECKPTINKAIVVSPSSLVKNWEKEFTKWLQGRLLCLPMEGGTKENTIRALEQFSMTSSRLGTPVLLISYETFRIYAEILCKYEVGMVICDEGHRLKNSDNLTYQALMGLKTKRRVLLSGTPIQNDLTEYYSLVNFVNPEMLGTAAVFKRNFESAILRGQNTDSTEGERQRAIEKTQELIGLVDQCIIRRTNQILTKYLPVKFEMVICAKLTSIQLELYTNFLKSDQVRRSLADCNEKASLTALADITTLKKICSHPDLIYEKITAREKGFENSQNVLPSNYNTKDLNPELSGKFMLLDFMLAAIRADGNDKVVLISNYTQTLDLFEQLARKRKYGFVRLDGTMSIKKRSKVVDRFNDPESDSFLFMLSSKAGGCGLNLIGANRLFMFDPDWNPANDEQAMARVWRDGQKKPCYIYRMVASGSIEEKILQRQTHKKSLSSTIIDNNESAEKHFTRDDLKDLFTFDADILSDTHEKLKCKRCVQNVQVKPPPDNTDCTSHLSQWYHCSNNRGLPDNILAQAWTDCKCVSFVFHHRSQAQEIVAIAEEAASEQPEEKPDRRKRPSTPPSDDSADEDFLGF.

The tract at residues 1-54 (MRRSLAPSQRGPMRPESRHSFTPPLLKKNKRSCQQELEREQELDRKRQSALRDA) is disordered. A required for chromatin remodeling, strand pairing activities and coupling of ATPase activity region spans residues 2–9 (RRSLAPSQ). S20 is subject to Phosphoserine. Residue T22 is modified to Phosphothreonine. Basic and acidic residues predominate over residues 36–47 (ELEREQELDRKR). Positions 172–346 (EGKRGNFNGC…YSLVNFVNPE (175 aa)) constitute a Helicase ATP-binding domain. 185-192 (DEMGLGKT) contacts ATP. The short motif at 297 to 300 (DEGH) is the DEGH box element. The Helicase C-terminal domain maps to 503–660 (LLDFMLAAIR…NNESAEKHFT (158 aa)). Positions 751-784 (EEAASEQPEEKPDRRKRPSTPPSDDSADEDFLGF) are disordered. Positions 775-784 (DSADEDFLGF) are enriched in acidic residues.

It belongs to the SNF2/RAD54 helicase family. In terms of assembly, interacts (via N-terminus) with spn-A/Rad51.

It is found in the nucleus. Involved in mitotic DNA repair and meiotic recombination. Functions in the recombinational DNA repair pathway. Essential for interhomolog gene conversion (GC), but may have a less important role in intersister GC than spn-A/Rad51. In the presence of DNA, spn-A/Rad51 enhances the ATPase activity of okr/Rad54. The protein is DNA repair and recombination protein RAD54-like of Drosophila yakuba (Fruit fly).